Reading from the N-terminus, the 417-residue chain is Arginine biosynthesis bifunctional protein ArgJ (417 aa).

Residues threonine 162, lysine 188, threonine 199, glutamate 289, asparagine 412, and serine 417 each contribute to the substrate site. Catalysis depends on threonine 199, which acts as the Nucleophile.

This sequence belongs to the ArgJ family. As to quaternary structure, heterotetramer of two alpha and two beta chains.

The protein localises to the cytoplasm. It carries out the reaction N(2)-acetyl-L-ornithine + L-glutamate = N-acetyl-L-glutamate + L-ornithine. The catalysed reaction is L-glutamate + acetyl-CoA = N-acetyl-L-glutamate + CoA + H(+). It participates in amino-acid biosynthesis; L-arginine biosynthesis; L-ornithine and N-acetyl-L-glutamate from L-glutamate and N(2)-acetyl-L-ornithine (cyclic): step 1/1. It functions in the pathway amino-acid biosynthesis; L-arginine biosynthesis; N(2)-acetyl-L-ornithine from L-glutamate: step 1/4. In terms of biological role, catalyzes two activities which are involved in the cyclic version of arginine biosynthesis: the synthesis of N-acetylglutamate from glutamate and acetyl-CoA as the acetyl donor, and of ornithine by transacetylation between N(2)-acetylornithine and glutamate. The polypeptide is Arginine biosynthesis bifunctional protein ArgJ (Nitrobacter winogradskyi (strain ATCC 25391 / DSM 10237 / CIP 104748 / NCIMB 11846 / Nb-255)).